We begin with the raw amino-acid sequence, 67 residues long: Protein AaeX (67 aa).

A run of 2 helical transmembrane segments spans residues 3 to 23 (LFPV…ELLL) and 43 to 63 (FVWH…YLIS).

The protein belongs to the AaeX family.

It is found in the cell membrane. This Escherichia coli O1:K1 / APEC protein is Protein AaeX.